Here is a 360-residue protein sequence, read N- to C-terminus: Decorin (360 aa).

Residues Met1–Ala16 form the signal peptide. Positions Gly17 to Glu30 are excised as a propeptide. O-linked (Xyl...) (glycosaminoglycan) serine glycosylation occurs at Ser34. Intrachain disulfides connect Cys55–Cys61 and Cys59–Cys68. LRR repeat units follow at residues Glu74–Ile94, Thr95–Ile118, Ser119–Leu142, Lys143–Ile163, Thr164–Leu187, Lys188–Ile213, Thr214–Ile234, Thr235–Ile258, Ser259–Leu282, Val283–Ile305, Ser306–Val335, and Gln336–Lys360. N-linked (GlcNAc...) asparagine glycosylation occurs at Asn212. Residues Asn263 and Asn304 are each glycosylated (N-linked (GlcNAc...) asparagine). Residues Cys314 and Cys347 are joined by a disulfide bond.

Belongs to the small leucine-rich proteoglycan (SLRP) family. SLRP class I subfamily. As to quaternary structure, binds to type I and type II collagen, fibronectin and TGF-beta. Forms a ternary complex with MFAP2 and ELN. Interacts with DPT. Post-translationally, the attached glycosaminoglycan chain can be either chondroitin sulfate or dermatan sulfate depending upon the tissue of origin.

The protein resides in the secreted. The protein localises to the extracellular space. Its subcellular location is the extracellular matrix. Its function is as follows. May affect the rate of fibrils formation. This Ovis aries (Sheep) protein is Decorin (DCN).